The primary structure comprises 240 residues: MORN repeat-containing protein 3 (240 aa).

The interval 6–35 (CPKKSESLWKGWDRKAQRNGLRSQVYAVNG) is interaction with MDM2. MORN repeat units lie at residues 38-60 (YVGEWKDNVKHGKGTQVWKKKGA), 62-84 (YEGDWKFGKRDGYGTLSLPDQQT), 91-113 (YSGWWKGDKKSGYGIQFFGPKEY), 114-136 (YEGDWCGSQRSGWGRMYYSNGDI), 137-159 (YEGQWENDKPNGEGMLRLKNGNR), 160-182 (YEGCWERGMKNGAGRFFHLDHGQ), and 184-205 (FEGFWVDNMAKCGTMIDFGRDE). The tract at residues 76–100 (TLSLPDQQTGKCRRVYSGWWKGDKK) is interaction with SIRT1. Positions 206–240 (APEPTQFPIPEVKILDPDGVLAEALAMFRKTEEGD) are interaction with TP53.

In terms of assembly, interacts with MEIG1. Interacts with TP53, MDM2 and SIRT1; the interactions mediate post-transcriptional modifications of TP53 by MDM2 and SIRT1.

Its subcellular location is the cytoplasmic vesicle. The protein resides in the secretory vesicle. It localises to the acrosome. Its function is as follows. Assembles a suppression complex (suppresome) by tethering SIRT1 and MDM2 to regulate composite modifications of p53/TP53. Confers both deacetylation-mediated functional inactivation, by SIRT1, and ubiquitination-dependent degradation, by MDM2, of p53/TP53, promoting a proliferative and cell survival behaviors. May play a role in the regulation of spermatogenesis. The polypeptide is MORN repeat-containing protein 3 (Homo sapiens (Human)).